Reading from the N-terminus, the 615-residue chain is Proteasome-associated ATPase (615 aa).

Residues 1-13 show a composition bias toward basic and acidic residues; it reads MSESQRHEAREDG. A disordered region spans residues 1–32; it reads MSESQRHEAREDGFTTPHESGLSSEDAAELEE. Positions 22–100 form a coiled coil; the sequence is LSSEDAAELE…LREEVDRLGQ (79 aa). An ATP-binding site is contributed by 302-307; that stretch reads GCGKTL. The docks into pockets in the proteasome alpha-ring stretch occupies residues 614–615; sequence YL.

This sequence belongs to the AAA ATPase family. As to quaternary structure, homohexamer. Assembles into a hexameric ring structure that caps the 20S proteasome core. Strongly interacts with the prokaryotic ubiquitin-like protein Pup through a hydrophobic interface; the interacting region of ARC lies in its N-terminal coiled-coil domain. There is one Pup binding site per ARC hexamer ring. Upon ATP-binding, the C-terminus of ARC interacts with the alpha-rings of the proteasome core, possibly by binding to the intersubunit pockets.

The protein operates within protein degradation; proteasomal Pup-dependent pathway. Functionally, ATPase which is responsible for recognizing, binding, unfolding and translocation of pupylated proteins into the bacterial 20S proteasome core particle. May be essential for opening the gate of the 20S proteasome via an interaction with its C-terminus, thereby allowing substrate entry and access to the site of proteolysis. Thus, the C-termini of the proteasomal ATPase may function like a 'key in a lock' to induce gate opening and therefore regulate proteolysis. This chain is Proteasome-associated ATPase, found in Mycobacterium sp. (strain JLS).